Here is a 147-residue protein sequence, read N- to C-terminus: Protein LOL1 (147 aa).

The tract at residues 1–38 is disordered; that stretch reads MVASRAPRSESPWLKKPMHGVSGSTAMASTPWSSMPPS. Positions 22 to 38 are enriched in polar residues; the sequence is SGSTAMASTPWSSMPPS. The putative zinc finger stretch occupies residues 47–77; it reads QLVCSGCRNLLMYPAGATSICCAVCGTVTAV.

The protein resides in the nucleus. Its function is as follows. Putative zinc finger that may be involved in programmed cell death and defense response. In Oryza sativa subsp. japonica (Rice), this protein is Protein LOL1 (LOL1).